A 598-amino-acid polypeptide reads, in one-letter code: UvrABC system protein C (598 aa).

One can recognise a GIY-YIG domain in the interval 13–91; it reads TLPGVYRMVD…IKGLKPRFNI (79 aa). One can recognise a UVR domain in the interval 200–235; the sequence is TALTEEITAQMNAAAENLDFETAAYLRDRLRMLATV.

This sequence belongs to the UvrC family. In terms of assembly, interacts with UvrB in an incision complex.

The protein localises to the cytoplasm. The UvrABC repair system catalyzes the recognition and processing of DNA lesions. UvrC both incises the 5' and 3' sides of the lesion. The N-terminal half is responsible for the 3' incision and the C-terminal half is responsible for the 5' incision. The chain is UvrABC system protein C from Thiobacillus denitrificans (strain ATCC 25259 / T1).